The chain runs to 354 residues: Fructose-bisphosphate aldolase (354 aa).

Position 50 (Ser-50) interacts with D-glyceraldehyde 3-phosphate. The active-site Proton donor is Asp-83. Positions 84, 105, 142, and 198 each coordinate Zn(2+). Gly-199 is a dihydroxyacetone phosphate binding site. His-232 is a Zn(2+) binding site. Residues Gly-233 to Ser-235 and Asn-275 to Thr-278 each bind dihydroxyacetone phosphate.

This sequence belongs to the class II fructose-bisphosphate aldolase family. It depends on Zn(2+) as a cofactor.

It catalyses the reaction beta-D-fructose 1,6-bisphosphate = D-glyceraldehyde 3-phosphate + dihydroxyacetone phosphate. It participates in carbohydrate degradation; glycolysis; D-glyceraldehyde 3-phosphate and glycerone phosphate from D-glucose: step 4/4. In terms of biological role, catalyzes the aldol condensation of dihydroxyacetone phosphate (DHAP or glycerone-phosphate) with glyceraldehyde 3-phosphate (G3P) to form fructose 1,6-bisphosphate (FBP) in gluconeogenesis and the reverse reaction in glycolysis. The protein is Fructose-bisphosphate aldolase (fba) of Pseudomonas aeruginosa (strain ATCC 15692 / DSM 22644 / CIP 104116 / JCM 14847 / LMG 12228 / 1C / PRS 101 / PAO1).